Reading from the N-terminus, the 130-residue chain is Ribonuclease P protein component (130 aa).

This sequence belongs to the RnpA family. As to quaternary structure, consists of a catalytic RNA component (M1 or rnpB) and a protein subunit.

It catalyses the reaction Endonucleolytic cleavage of RNA, removing 5'-extranucleotides from tRNA precursor.. In terms of biological role, RNaseP catalyzes the removal of the 5'-leader sequence from pre-tRNA to produce the mature 5'-terminus. It can also cleave other RNA substrates such as 4.5S RNA. The protein component plays an auxiliary but essential role in vivo by binding to the 5'-leader sequence and broadening the substrate specificity of the ribozyme. The chain is Ribonuclease P protein component from Psychrobacter sp. (strain PRwf-1).